An 823-amino-acid chain; its full sequence is Tax1-binding protein 1 homolog B (823 aa).

A coiled-coil region spans residues 149–487 (VTTKASYLEQ…QKQVVKFNEQ (339 aa)). Disordered regions lie at residues 342–377 (HRQL…QQAN) and 486–519 (EQQG…STSD). Residues 356–368 (KALREQLRQKEEQ) are compositionally biased toward basic and acidic residues. Low complexity predominate over residues 498–518 (AAAGPLSASPEASAPGSPSTS). Residues 548-638 (QMLNEERERC…NREEEQKDSN (91 aa)) are a coiled coil. The interval 650–746 (MPYAQDDPSP…EPAAPEPAEF (97 aa)) is disordered. A compositionally biased stretch (acidic residues) spans 723–739 (LEEPEEPQSTQNDDEPA). UBZ1-type zinc fingers lie at residues 762–788 (QKRC…VESH) and 789–815 (WKIC…VLTH). 8 residues coordinate Zn(2+): Cys765, Cys768, His784, His788, Cys792, Cys795, His811, and His815.

Expressed at relatively high levels in both proximal and distal regions of the fin bud during pectoral fin development.

In terms of biological role, may have anti-apoptotic activity. In Danio rerio (Zebrafish), this protein is Tax1-binding protein 1 homolog B (tax1bp1b).